A 475-amino-acid polypeptide reads, in one-letter code: MASTLRLGTSALRSSSIAAKPVVQSAAFNGLRCYSTGKAKSLKETFAEKLPAELEKVKKLRKEHGSKVIGEVTLDQAYGGARGVKCLVWEGSVLDSEEGIRFRGRTIPECQELLPKAPGGQEPLPEGLFWLLLTGEIPTEQQVRDLSAEWAARSDLPKFIEELIDRCPSTLHPMSQFSLAVTALEHESAFAKAYAKGINKKDYWNYTFEDSMDLIAKLPTIAAKIYRNVFKDGKVAPIQKDKDYSYNLANQLGYGDNNDFVELMRLYLTIHSDHEGGNVSAHTTHLVGSALSSPMLSLAAGLNGLAGPLHGLANQEVLNWLTKMKAAIGNDLSDEAIKNYLWSTLNAGQVVPGYGHAVLRKTDPRYVSQREFALRKLPDDPMFKLVSQVYKIAPGVLTEHGKTKNPYPNVDAHSGVLLQYYGLTEANYYTVLFGVSRALGVLPQLIIDRALGAPIERPKSYSTELSPSLLVLSCK.

Catalysis depends on residues His310, His356, and Asp411.

It belongs to the citrate synthase family.

Its subcellular location is the mitochondrion matrix. The enzyme catalyses oxaloacetate + acetyl-CoA + H2O = citrate + CoA + H(+). It participates in carbohydrate metabolism; tricarboxylic acid cycle; isocitrate from oxaloacetate: step 1/2. The polypeptide is Citrate synthase, mitochondrial (cit-1) (Aspergillus niger).